Reading from the N-terminus, the 376-residue chain is Lipoyl synthase 1, mitochondrial (376 aa).

The [4Fe-4S] cluster site is built by Cys-109, Cys-114, Cys-120, Cys-140, Cys-144, Cys-147, and Ser-356. The Radical SAM core domain maps to Glu-125 to Arg-345.

The protein belongs to the radical SAM superfamily. Lipoyl synthase family. [4Fe-4S] cluster is required as a cofactor.

The protein resides in the mitochondrion. The catalysed reaction is [[Fe-S] cluster scaffold protein carrying a second [4Fe-4S](2+) cluster] + N(6)-octanoyl-L-lysyl-[protein] + 2 oxidized [2Fe-2S]-[ferredoxin] + 2 S-adenosyl-L-methionine + 4 H(+) = [[Fe-S] cluster scaffold protein] + N(6)-[(R)-dihydrolipoyl]-L-lysyl-[protein] + 4 Fe(3+) + 2 hydrogen sulfide + 2 5'-deoxyadenosine + 2 L-methionine + 2 reduced [2Fe-2S]-[ferredoxin]. It participates in protein modification; protein lipoylation via endogenous pathway; protein N(6)-(lipoyl)lysine from octanoyl-[acyl-carrier-protein]: step 2/2. Its function is as follows. Catalyzes the radical-mediated insertion of two sulfur atoms into the C-6 and C-8 positions of the octanoyl moiety bound to the lipoyl domains of lipoate-dependent enzymes, thereby converting the octanoylated domains into lipoylated derivatives. The polypeptide is Lipoyl synthase 1, mitochondrial (Pisum sativum (Garden pea)).